The chain runs to 141 residues: Large ribosomal subunit protein uL11 (141 aa).

The protein belongs to the universal ribosomal protein uL11 family. As to quaternary structure, part of the ribosomal stalk of the 50S ribosomal subunit. Interacts with L10 and the large rRNA to form the base of the stalk. L10 forms an elongated spine to which L12 dimers bind in a sequential fashion forming a multimeric L10(L12)X complex. In terms of processing, one or more lysine residues are methylated.

In terms of biological role, forms part of the ribosomal stalk which helps the ribosome interact with GTP-bound translation factors. This chain is Large ribosomal subunit protein uL11, found in Kosmotoga olearia (strain ATCC BAA-1733 / DSM 21960 / TBF 19.5.1).